We begin with the raw amino-acid sequence, 309 residues long: Potassium channel subfamily K member 16 (309 aa).

At methionine 1–arginine 13 the chain is on the cytoplasmic side. A helical membrane pass occupies residues valine 14 to leucine 34. Residues serine 98–proline 116 constitute an intramembrane region (pore-forming). K(+) contacts are provided by threonine 108, isoleucine 109, glycine 110, and tyrosine 111. Positions threonine 108 to asparagine 113 are selectivity filter 1. A helical transmembrane segment spans residues alanine 120 to leucine 140. Residues asparagine 141–glutamine 165 are Cytoplasmic-facing. The chain crosses the membrane as a helical span at residues valine 166–phenylalanine 186. Residues glycine 202 to glycine 221 constitute an intramembrane region (pore-forming). K(+)-binding residues include threonine 212, isoleucine 213, glycine 214, and phenylalanine 215. Positions threonine 212–aspartate 217 are selectivity filter 2. The chain crosses the membrane as a helical span at residues isoleucine 238–leucine 258. The Cytoplasmic portion of the chain corresponds to histidine 259 to serine 309.

The protein belongs to the two pore domain potassium channel (TC 1.A.1.8) family. As to quaternary structure, homodimer; disulfide-linked. Heterodimer with KCNK17 and KCNK5. Highly expressed in pancreas, in both endocrine (alpha, beta, gamma, delta, and epsilon) and exocrine (acinar and ductal) cells. Expressed in pacreatic beta-cells (at protein level). Expressed in pacreatic delta-cells (at protein level). Not detectable in the other tissues tested.

The protein resides in the endoplasmic reticulum membrane. The protein localises to the cell membrane. It localises to the mitochondrion inner membrane. The catalysed reaction is K(+)(in) = K(+)(out). It carries out the reaction Rb(+)(in) = Rb(+)(out). The enzyme catalyses Cs(+)(in) = Cs(+)(out). Its activity is regulated as follows. The channel conductance is stimulated by extracellular alkaline pH. Inhibited by Ba(2+) ions, quinine, quinidine, chloroform and halothane. K(+) channel that conducts voltage-dependent outward rectifying currents upon membrane depolarization. Voltage sensing is coupled to K(+) electrochemical gradient in an 'ion flux gating' mode where outward but not inward ion flow opens the gate. Homo- and heterodimerizes to form functional channels with distinct regulatory and gating properties. In pancreatic islets, conducts K(+) countercurrents for Ca(2+) release from the endoplasmic reticulum (ER) and regulates the frequency and duration of cytosolic Ca(2+) oscillations coupled to secretion of pancreatic hormones. In pancreatic beta cells, drives ER Ca(2+) efflux, which in turn activates Ca(2+)-dependent plasma membrane K(+) slow currents and cytosolic Ca(2+) influx, overall contributing to synchronous cytosolic Ca(2+) oscillations. Limits glucose-induced cytosolic Ca(2+) oscillations coupled to second-phase INS secretion. Contributes to beta cell adaptation to acute inflammation by maintaining normal cytosolic Ca(2+) levels and INS secretion. May regulate beta cell mitochondrial Ca(2+) levels either indirectly via ER Ca(2+) efflux or directly by hyperpolarizing the mitochondrial membrane potential. Limits mitochondrial Ca(2+) oscillations and ATP production involved in glucose homeostasis upon metabolic stress. In pancreatic delta cells, limits Ca(2+)-induced Ca(2+)-release involved in somatostatin secretion and modulates islet paracrine signaling involved in glucagon secretion. Permeable to other monovalent cations such as Rb(+) and Cs(+). This is Potassium channel subfamily K member 16 from Homo sapiens (Human).